The primary structure comprises 190 residues: Small ribosomal subunit protein eS7 (190 aa).

This sequence belongs to the eukaryotic ribosomal protein eS7 family.

This is Small ribosomal subunit protein eS7 (RPS7) from Avicennia marina (Grey mangrove).